A 136-amino-acid polypeptide reads, in one-letter code: Cytochrome c-550 (136 aa).

An N-terminal signal peptide occupies residues 1-28 (MTKLTFGALVALAMTAAASTAMSSKAMA). Heme c-binding residues include Cys41, Cys44, His45, and Met107.

Binds 1 heme c group covalently per subunit. Post-translationally, the N-terminus is blocked.

It localises to the periplasm. Its function is as follows. Plays a role in bacteroid respiration under conditions of oxygen limitation. Required for electron-transfer during denitrification. The protein is Cytochrome c-550 (cycA) of Bradyrhizobium diazoefficiens (strain JCM 10833 / BCRC 13528 / IAM 13628 / NBRC 14792 / USDA 110).